The sequence spans 241 residues: Lipopolysaccharide export system ATP-binding protein LptB (241 aa).

The ABC transporter domain occupies 4–237 (LTAENLAKSY…EQVKRVYLGE (234 aa)). ATP is bound at residue 36 to 43 (GPNGAGKT).

The protein belongs to the ABC transporter superfamily. Outer membrane lipopolysaccharide export (TC 1.B.42) family. In terms of assembly, component of the lipopolysaccharide transport and assembly complex. The LptBFG transporter is composed of two ATP-binding proteins (LptB) and two transmembrane proteins (LptF and LptG).

The protein localises to the cytoplasm. It localises to the cell inner membrane. Part of the ABC transporter complex LptBFG involved in the translocation of lipopolysaccharide (LPS) from the inner membrane to the outer membrane. Probably responsible for energy coupling to the transport system. This chain is Lipopolysaccharide export system ATP-binding protein LptB (lptB), found in Haemophilus influenzae (strain ATCC 51907 / DSM 11121 / KW20 / Rd).